The chain runs to 562 residues: Formate--tetrahydrofolate ligase (562 aa).

71–78 is a binding site for ATP; it reads TPAGEGKS.

Belongs to the formate--tetrahydrofolate ligase family.

The catalysed reaction is (6S)-5,6,7,8-tetrahydrofolate + formate + ATP = (6R)-10-formyltetrahydrofolate + ADP + phosphate. The protein operates within one-carbon metabolism; tetrahydrofolate interconversion. The protein is Formate--tetrahydrofolate ligase of Bacillus cereus (strain G9842).